Reading from the N-terminus, the 295-residue chain is bZIP transcription factor 60 (295 aa).

A disordered region spans residues 101–154 (PAAADDSGKENSDLVVEKKSNDSGSEIHDDDDEEGDDDAVAKKRRRRVRNRDAA). Over residues 106-127 (DSGKENSDLVVEKKSNDSGSEI) the composition is skewed to basic and acidic residues. Residues 128–138 (HDDDDEEGDDD) are compositionally biased toward acidic residues. Residues 140-203 (VAKKRRRRVR…QSLRYCLQKG (64 aa)) enclose the bZIP domain. Residues 142–162 (KKRRRRVRNRDAAVRSRERKK) form a basic motif region. The interval 168-182 (LEKKSKYLERECLRL) is leucine-zipper. The helical transmembrane segment at 224 to 244 (LLLGSLLWLLGVNFICLFPYM) threads the bilayer.

The protein belongs to the bZIP family. In terms of assembly, interacts with BZIP28. As to expression, expressed in seedlings, rosette and cauline leaves, stems, buds, flowers, siliques, immature seeds, anthers and pollen grains.

It is found in the endoplasmic reticulum membrane. The protein resides in the nucleus. Its function is as follows. Transcription factor involved in the unfolded protein response (UPR). Acts during endoplasmic reticulum stress (ER) by activating unfolded protein response (UPR) target genes via direct binding to the UPR element (UPRE). Plays a role in plant immunity and abiotic stress responses. The chain is bZIP transcription factor 60 from Arabidopsis thaliana (Mouse-ear cress).